Here is a 225-residue protein sequence, read N- to C-terminus: RNA chaperone ProQ (225 aa).

A disordered region spans residues 107–169; it reads KARVQAQRAA…VAAKAPREER (63 aa). Low complexity predominate over residues 109–118; that stretch reads RVQAQRAAQQ. The segment covering 137 to 146 has biased composition (basic residues); that stretch reads RERKPRPQQP. Over residues 147-156 the composition is skewed to basic and acidic residues; that stretch reads RRKEGAEQRK.

Belongs to the ProQ family.

The protein resides in the cytoplasm. Its function is as follows. RNA chaperone with significant RNA binding, RNA strand exchange and RNA duplexing activities. May regulate ProP activity through an RNA-based, post-transcriptional mechanism. This chain is RNA chaperone ProQ, found in Klebsiella pneumoniae subsp. pneumoniae (strain ATCC 700721 / MGH 78578).